The primary structure comprises 844 residues: 3',5'-cyclic-AMP phosphodiesterase 4A (844 aa).

The disordered stretch occupies residues 1-124 (MEPPAAPSER…RSPLDSQASP (124 aa)). A Phosphoserine modification is found at Ser-13. Residues 36–46 (QPRTPIRIQQR) show a composition bias toward low complexity. Residues 51–78 (SAERSEPERSPHRPIERADAVDTGDRPG) show a composition bias toward basic and acidic residues. Residues 82 to 91 (TRMSWPSSFH) show a composition bias toward polar residues. Phosphoserine is present on residues Ser-147, Ser-152, Ser-160, Ser-204, and Ser-333. The 330-residue stretch at 343-672 (VKTDQEDLLA…DWYHSAIRQS (330 aa)) folds into the PDEase domain. Lys-344 participates in a covalent cross-link: Glycyl lysine isopeptide (Lys-Gly) (interchain with G-Cter in SUMO). His-419 functions as the Proton donor in the catalytic mechanism. 3',5'-cyclic AMP is bound at residue His-419. Residues His-419 and His-423 each contribute to the AMP site. The Zn(2+) site is built by His-423, His-459, Asp-460, and Asp-577. AMP-binding residues include Asp-460, Asp-577, Gln-628, and Phe-631. Asp-460 serves as a coordination point for Mg(2+). Asp-460 contributes to the Mn(2+) binding site. 3',5'-cyclic AMP is bound by residues Gln-628 and Phe-631. Ser-672 and Ser-674 each carry phosphoserine. The segment at 819–844 (ACSGTSGDNSAVISAPGRWGSGGDPA) is disordered. The span at 820-830 (CSGTSGDNSAV) shows a compositional bias: polar residues.

The protein belongs to the cyclic nucleotide phosphodiesterase family. PDE4 subfamily. As to quaternary structure, interacts with LYN (via SH3 domain). Interacts with ARRB2. Zn(2+) serves as cofactor. Mg(2+) is required as a cofactor. It depends on Mn(2+) as a cofactor. Post-translationally, proteolytically cleaved by CASP3.

The protein resides in the cytoplasm. The protein localises to the cytosol. It is found in the membrane. It carries out the reaction 3',5'-cyclic AMP + H2O = AMP + H(+). Its pathway is purine metabolism; 3',5'-cyclic AMP degradation; AMP from 3',5'-cyclic AMP: step 1/1. With respect to regulation, inhibited by rolipram and diazepam. Functionally, hydrolyzes the second messenger 3',5'-cyclic AMP (cAMP), which is a key regulator of many important physiological processes. Its function is as follows. Efficiently hydrolyzes cAMP. The sequence is that of 3',5'-cyclic-AMP phosphodiesterase 4A (Pde4a) from Mus musculus (Mouse).